Reading from the N-terminus, the 90-residue chain is DNA/RNA-binding protein Alba (90 aa).

N6-acetyllysine is present on K11.

The protein belongs to the histone-like Alba family. In terms of processing, acetylated. Acetylation at Lys-11 decreases DNA-binding affinity.

Its subcellular location is the cytoplasm. The protein localises to the chromosome. Binds double-stranded DNA tightly but without sequence specificity. Involved in DNA compaction. The polypeptide is DNA/RNA-binding protein Alba (Picrophilus torridus (strain ATCC 700027 / DSM 9790 / JCM 10055 / NBRC 100828 / KAW 2/3)).